We begin with the raw amino-acid sequence, 110 residues long: MGVVRSLLLFVVAAVTEIGGAWLVWQGVREHRGPVWVGLGIGFLAAYGFVATLQPDAHFGRILAAYGGVFVAGSLLWGVAVDGFRPDRYDLAGAAICLLGVAVIMYARRV.

Transmembrane regions (helical) follow at residues 8-28, 33-53, 62-82, and 87-107; these read LLFV…WQGV, GPVW…VATL, ILAA…VAVD, and DRYD…IMYA.

It belongs to the UPF0060 family.

It localises to the cell membrane. In Frankia casuarinae (strain DSM 45818 / CECT 9043 / HFP020203 / CcI3), this protein is UPF0060 membrane protein Francci3_2786.